The chain runs to 261 residues: Kallikrein 1-related peptidase b11 (261 aa).

The N-terminal stretch at 1–18 (MWFLILFLALSLGGIDAA) is a signal peptide. The propeptide at 19–24 (PPVQSR) is activation peptide. The region spanning 25 to 258 (IVGGFNCEKN…FTNWIKDTMA (234 aa)) is the Peptidase S1 domain. Intrachain disulfides connect cysteine 31/cysteine 173, cysteine 50/cysteine 66, cysteine 152/cysteine 219, cysteine 184/cysteine 198, and cysteine 209/cysteine 234. The active-site Charge relay system is histidine 65. Asparagine 102 is a glycosylation site (N-linked (GlcNAc...) asparagine). Aspartate 120 functions as the Charge relay system in the catalytic mechanism. The Charge relay system role is filled by serine 213.

It belongs to the peptidase S1 family. Kallikrein subfamily.

The enzyme catalyses Preferential cleavage of Arg-|-Xaa bonds in small molecule substrates. Highly selective action to release kallidin (lysyl-bradykinin) from kininogen involves hydrolysis of Met-|-Xaa or Leu-|-Xaa.. Functionally, glandular kallikreins cleave Met-Lys and Arg-Ser bonds in kininogen to release Lys-bradykinin. In Mus musculus (Mouse), this protein is Kallikrein 1-related peptidase b11 (Klk1b11).